A 702-amino-acid chain; its full sequence is Cytolytic toxin-beta (702 aa).

Residues 2–264 (PSDILVVAAL…EAPQLMADSS (263 aa)) are structural MACPF/CDC pore-forming domain. N-linked (GlcNAc...) asparagine glycans are attached at residues Asn-94, Asn-101, and Asn-286. The interval 265–387 (TPILRKVRNT…DIIEEAKHKV (123 aa)) is structural FAT domain. The thioredoxin (THX) domain stretch occupies residues 388-515 (VLSKSQMARE…PRIPPVETIQ (128 aa)). Residues 504–702 (SNPRIPPVET…ANGQIKLKGE (199 aa)) form the B30.2/SPRY domain.

This sequence belongs to the SNTX/VTX toxin family. Heterodimer of alpha and beta subunits; non-covalently linked. Also associates into tetramers or even higher aggregates. In terms of processing, intrachain disulfide bonds may be present in the heterodimer. As to expression, expressed by the venom gland.

The protein localises to the secreted. Functionally, this heterodimer induces potent hemolytic activities (when tested on rabbit erythrocytes, EC(50)=25-56 ng/mL) due to its ability to form pores in the cell membrane. The pore may be composed of 10 alpha/beta heterodimers. The toxin shows cardiovascular effects that include a vasorelaxant action that may involve the L-arginine-nitric oxid synthase pathway. In addition, it displays edema-inducing activities, increases vascular permeability. It also shows myotoxic activities and interferes irreversibly with neuromuscular function. It also induces irreversible platelet aggregation in rabbit or rat (but not in human or mouse) whole blood. In addition, it has been observed to increase spontaneous quantal acetylcholine release from isolated frog cutaneous pectoris motor endings. This Scorpaena plumieri (Spotted scorpionfish) protein is Cytolytic toxin-beta.